A 143-amino-acid polypeptide reads, in one-letter code: Ribonuclease H (143 aa).

Positions 1–136 (MQEIEIFCDG…CDSLAKLEAQ (136 aa)) constitute an RNase H type-1 domain. Mg(2+)-binding residues include Asp9, Glu47, Asp69, and Asp128.

The protein belongs to the RNase H family. As to quaternary structure, monomer. It depends on Mg(2+) as a cofactor.

The protein resides in the cytoplasm. The enzyme catalyses Endonucleolytic cleavage to 5'-phosphomonoester.. Its function is as follows. Endonuclease that specifically degrades the RNA of RNA-DNA hybrids. The protein is Ribonuclease H of Helicobacter pylori (strain HPAG1).